A 204-amino-acid polypeptide reads, in one-letter code: Flavin-dependent thymidylate synthase (204 aa).

The region spanning 1–204 is the ThyX domain; the sequence is MTVTLMQHTS…RYLFCLNQEG (204 aa). FAD is bound by residues Ser-50 and 74–76; that span reads RHR. Residues 71–74, 84–86, and Lys-143 each bind dUMP; these read ELAR and SSR. The ThyX motif motif lies at 74–84; the sequence is RHRIASLSVKS. Residues 159–161 and Asn-165 each bind FAD; that span reads NAR. A dUMP-binding site is contributed by Arg-170. Catalysis depends on Arg-170, which acts as the Involved in ionization of N3 of dUMP, leading to its activation.

It belongs to the thymidylate synthase ThyX family. Homotetramer. The cofactor is FAD.

It carries out the reaction dUMP + (6R)-5,10-methylene-5,6,7,8-tetrahydrofolate + NADPH + H(+) = dTMP + (6S)-5,6,7,8-tetrahydrofolate + NADP(+). The protein operates within pyrimidine metabolism; dTTP biosynthesis. Catalyzes the reductive methylation of 2'-deoxyuridine-5'-monophosphate (dUMP) to 2'-deoxythymidine-5'-monophosphate (dTMP) while utilizing 5,10-methylenetetrahydrofolate (mTHF) as the methyl donor, and NADPH and FADH(2) as the reductant. The polypeptide is Flavin-dependent thymidylate synthase (Wolinella succinogenes (strain ATCC 29543 / DSM 1740 / CCUG 13145 / JCM 31913 / LMG 7466 / NCTC 11488 / FDC 602W) (Vibrio succinogenes)).